A 339-amino-acid polypeptide reads, in one-letter code: Foldase protein PrsA (339 aa).

The signal sequence occupies residues 1–26; that stretch reads MKHLKNNTKKFTALLFALLFSMSIAG. Cysteine 27 carries the N-palmitoyl cysteine lipid modification. Cysteine 27 is lipidated: S-diacylglycerol cysteine. The PpiC domain occupies 197-287; sequence KPTFHAQHVL…FGYHVIKLID (91 aa).

The protein belongs to the PrsA family.

It localises to the cell membrane. The enzyme catalyses [protein]-peptidylproline (omega=180) = [protein]-peptidylproline (omega=0). Functionally, plays a major role in protein secretion by helping the post-translocational extracellular folding of several secreted proteins. The sequence is that of Foldase protein PrsA from Clostridium tetani (strain Massachusetts / E88).